A 309-amino-acid polypeptide reads, in one-letter code: 15-cis-phytoene synthase (309 aa).

Positions leucine 290–leucine 309 are disordered.

It belongs to the phytoene/squalene synthase family. It depends on ATP as a cofactor. The cofactor is Mn(2+). Requires Mg(2+) as cofactor.

The catalysed reaction is 2 (2E,6E,10E)-geranylgeranyl diphosphate = 15-cis-phytoene + 2 diphosphate. It functions in the pathway carotenoid biosynthesis; phytoene biosynthesis. With respect to regulation, inhibited by phosphate ions and squalestatin. Functionally, involved in the biosynthesis of carotenoids. Catalyzes the condensation of two molecules of geranylgeranyl diphosphate (GGPP) to give prephytoene diphosphate (PPPP) and the subsequent rearrangement of the cyclopropylcarbinyl intermediate to yield the 15-cis-phytoene isomer. In Pantoea ananas (Erwinia uredovora), this protein is 15-cis-phytoene synthase (crtB).